An 868-amino-acid chain; its full sequence is uncharacterized protein (868 aa).

The protein localises to the cytoplasm. The protein resides in the nucleus. This is an uncharacterized protein from Schizosaccharomyces pombe (strain 972 / ATCC 24843) (Fission yeast).